The following is a 336-amino-acid chain: Aspartate--ammonia ligase (336 aa).

It belongs to the class-II aminoacyl-tRNA synthetase family. AsnA subfamily.

Its subcellular location is the cytoplasm. The catalysed reaction is L-aspartate + NH4(+) + ATP = L-asparagine + AMP + diphosphate + H(+). The protein operates within amino-acid biosynthesis; L-asparagine biosynthesis; L-asparagine from L-aspartate (ammonia route): step 1/1. The protein is Aspartate--ammonia ligase of Limosilactobacillus reuteri (strain DSM 20016) (Lactobacillus reuteri).